The sequence spans 762 residues: Transcription factor kpeA (762 aa).

Residues 267–361 (FDHTSHGSQS…PLKPDQRKQA (95 aa)) are disordered. Low complexity predominate over residues 294-312 (KKPSSPTRSTGSSSSTSPP). The zn(2)-C6 fungal-type DNA-binding region spans 370 to 401 (CLRCKFLKKTCDKGEPCAGCQPSHARLWQVPC).

It localises to the nucleus. In terms of biological role, transcription factor that regulates conidiation as well as kojic acid production, likely by negatively controlling kojR and kojA expression. This Aspergillus oryzae (strain ATCC 42149 / RIB 40) (Yellow koji mold) protein is Transcription factor kpeA.